A 419-amino-acid polypeptide reads, in one-letter code: Capsule polysaccharide modification protein LipB (419 aa).

The protein resides in the cell inner membrane. In terms of biological role, involved in the phospholipid modification of the capsular polysaccharide, a strong requirement for its translocation to the cell surface. The chain is Capsule polysaccharide modification protein LipB (lipB) from Neisseria meningitidis serogroup B (strain ATCC BAA-335 / MC58).